We begin with the raw amino-acid sequence, 481 residues long: Aspartyl/glutamyl-tRNA(Asn/Gln) amidotransferase subunit B (481 aa).

This sequence belongs to the GatB/GatE family. GatB subfamily. As to quaternary structure, heterotrimer of A, B and C subunits.

The catalysed reaction is L-glutamyl-tRNA(Gln) + L-glutamine + ATP + H2O = L-glutaminyl-tRNA(Gln) + L-glutamate + ADP + phosphate + H(+). The enzyme catalyses L-aspartyl-tRNA(Asn) + L-glutamine + ATP + H2O = L-asparaginyl-tRNA(Asn) + L-glutamate + ADP + phosphate + 2 H(+). Functionally, allows the formation of correctly charged Asn-tRNA(Asn) or Gln-tRNA(Gln) through the transamidation of misacylated Asp-tRNA(Asn) or Glu-tRNA(Gln) in organisms which lack either or both of asparaginyl-tRNA or glutaminyl-tRNA synthetases. The reaction takes place in the presence of glutamine and ATP through an activated phospho-Asp-tRNA(Asn) or phospho-Glu-tRNA(Gln). The chain is Aspartyl/glutamyl-tRNA(Asn/Gln) amidotransferase subunit B from Pseudomonas putida (strain ATCC 47054 / DSM 6125 / CFBP 8728 / NCIMB 11950 / KT2440).